A 104-amino-acid chain; its full sequence is MSGFTLSDLERIVDERSKAPPEESWTAKLCAAGQPKAAKKLGEEAIEAVMAAVTGDRDNLTYEAADLLYHLMVVLKIAGIPLQNVMGELERRTAQSGLQEKASR.

Belongs to the PRA-PH family.

The protein localises to the cytoplasm. It carries out the reaction 1-(5-phospho-beta-D-ribosyl)-ATP + H2O = 1-(5-phospho-beta-D-ribosyl)-5'-AMP + diphosphate + H(+). The protein operates within amino-acid biosynthesis; L-histidine biosynthesis; L-histidine from 5-phospho-alpha-D-ribose 1-diphosphate: step 2/9. In Rhizobium rhizogenes (strain K84 / ATCC BAA-868) (Agrobacterium radiobacter), this protein is Phosphoribosyl-ATP pyrophosphatase.